A 436-amino-acid chain; its full sequence is Eukaryotic peptide chain release factor subunit 1 (436 aa).

The protein belongs to the eukaryotic release factor 1 family. In terms of assembly, heterodimer of two subunits, one of which binds GTP.

It localises to the cytoplasm. In terms of biological role, directs the termination of nascent peptide synthesis (translation) in response to the termination codons UAA and possibly also UAG and UGA. The protein is Eukaryotic peptide chain release factor subunit 1 (eRF1) of Dileptus margaritifer (Ciliate).